The sequence spans 373 residues: Probable tRNA sulfurtransferase (373 aa).

Residues 54-158 (NKNIEELSKV…NDVAYFYYKI (105 aa)) enclose the THUMP domain. ATP-binding positions include 176 to 177 (LF), 201 to 202 (NF), K256, G278, and Q287.

This sequence belongs to the ThiI family.

It localises to the cytoplasm. It carries out the reaction [ThiI sulfur-carrier protein]-S-sulfanyl-L-cysteine + a uridine in tRNA + 2 reduced [2Fe-2S]-[ferredoxin] + ATP + H(+) = [ThiI sulfur-carrier protein]-L-cysteine + a 4-thiouridine in tRNA + 2 oxidized [2Fe-2S]-[ferredoxin] + AMP + diphosphate. It catalyses the reaction [ThiS sulfur-carrier protein]-C-terminal Gly-Gly-AMP + S-sulfanyl-L-cysteinyl-[cysteine desulfurase] + AH2 = [ThiS sulfur-carrier protein]-C-terminal-Gly-aminoethanethioate + L-cysteinyl-[cysteine desulfurase] + A + AMP + 2 H(+). Its pathway is cofactor biosynthesis; thiamine diphosphate biosynthesis. In terms of biological role, catalyzes the ATP-dependent transfer of a sulfur to tRNA to produce 4-thiouridine in position 8 of tRNAs, which functions as a near-UV photosensor. Also catalyzes the transfer of sulfur to the sulfur carrier protein ThiS, forming ThiS-thiocarboxylate. This is a step in the synthesis of thiazole, in the thiamine biosynthesis pathway. The sulfur is donated as persulfide by IscS. The sequence is that of Probable tRNA sulfurtransferase from Saccharolobus islandicus (strain Y.N.15.51 / Yellowstone #2) (Sulfolobus islandicus).